Here is a 108-residue protein sequence, read N- to C-terminus: Peptidyl-prolyl cis-trans isomerase FKBP1B (108 aa).

Residues 20–108 (GQICVVHYTG…IFDVELLNLE (89 aa)) form the PPIase FKBP-type domain.

The protein belongs to the FKBP-type PPIase family. FKBP1 subfamily. As to quaternary structure, identified in a complex composed of RYR2, FKBP1B, PKA catalytic subunit, PRKAR2A, AKAP6, and the protein phosphatases PP2A and PP1. Interacts directly with RYR2. In terms of tissue distribution, detected in heart muscle (at protein level). Ubiquitous.

It is found in the cytoplasm. The protein resides in the sarcoplasmic reticulum. It catalyses the reaction [protein]-peptidylproline (omega=180) = [protein]-peptidylproline (omega=0). Inhibited by both FK506 and rapamycin. Its function is as follows. Has the potential to contribute to the immunosuppressive and toxic effects of FK506 and rapamycin. PPIases accelerate the folding of proteins. It catalyzes the cis-trans isomerization of proline imidic peptide bonds in oligopeptides. The sequence is that of Peptidyl-prolyl cis-trans isomerase FKBP1B (Fkbp1b) from Rattus norvegicus (Rat).